Reading from the N-terminus, the 124-residue chain is Small ribosomal subunit protein uS13 (124 aa).

The tract at residues 91 to 124 is disordered; it reads HRKGLPVNGQNTRNNARTRKGKPKAVTGKKQAGK.

Belongs to the universal ribosomal protein uS13 family. In terms of assembly, part of the 30S ribosomal subunit. Forms a loose heterodimer with protein S19. Forms two bridges to the 50S subunit in the 70S ribosome.

Functionally, located at the top of the head of the 30S subunit, it contacts several helices of the 16S rRNA. In the 70S ribosome it contacts the 23S rRNA (bridge B1a) and protein L5 of the 50S subunit (bridge B1b), connecting the 2 subunits; these bridges are implicated in subunit movement. Contacts the tRNAs in the A and P-sites. This is Small ribosomal subunit protein uS13 from Acholeplasma laidlawii (strain PG-8A).